Reading from the N-terminus, the 256-residue chain is Thiazole synthase (256 aa).

K96 acts as the Schiff-base intermediate with DXP in catalysis. Residues G157, 183–184, and 205–206 contribute to the 1-deoxy-D-xylulose 5-phosphate site; these read AG and NT.

Belongs to the ThiG family. As to quaternary structure, homotetramer. Forms heterodimers with either ThiH or ThiS.

It is found in the cytoplasm. It carries out the reaction [ThiS sulfur-carrier protein]-C-terminal-Gly-aminoethanethioate + 2-iminoacetate + 1-deoxy-D-xylulose 5-phosphate = [ThiS sulfur-carrier protein]-C-terminal Gly-Gly + 2-[(2R,5Z)-2-carboxy-4-methylthiazol-5(2H)-ylidene]ethyl phosphate + 2 H2O + H(+). The protein operates within cofactor biosynthesis; thiamine diphosphate biosynthesis. Its function is as follows. Catalyzes the rearrangement of 1-deoxy-D-xylulose 5-phosphate (DXP) to produce the thiazole phosphate moiety of thiamine. Sulfur is provided by the thiocarboxylate moiety of the carrier protein ThiS. In vitro, sulfur can be provided by H(2)S. The protein is Thiazole synthase of Bacillus cereus (strain G9842).